The sequence spans 214 residues: Adenylate kinase (214 aa).

10-15 (GAGKGT) is a binding site for ATP. An NMP region spans residues 30 to 59 (STGDMFRAAIKAGTELGKQAKALMDEGKLV). AMP-binding positions include T31, R36, 57-59 (KLV), 85-88 (GFPR), and Q92. The LID stretch occupies residues 122-159 (GRRVHQASGRSYHIVYNPPKVEGKDDVTGEDLIIRADD). ATP-binding positions include R123 and 132 to 133 (SY). Residues R156 and R167 each coordinate AMP. Q200 contributes to the ATP binding site.

This sequence belongs to the adenylate kinase family. Monomer.

The protein localises to the cytoplasm. It catalyses the reaction AMP + ATP = 2 ADP. The protein operates within purine metabolism; AMP biosynthesis via salvage pathway; AMP from ADP: step 1/1. Catalyzes the reversible transfer of the terminal phosphate group between ATP and AMP. Plays an important role in cellular energy homeostasis and in adenine nucleotide metabolism. It may be linked to the biosynthesis of lipopolysaccharide surface molecules, which are important for the pathogenesis of H.influenzae. This is Adenylate kinase from Haemophilus influenzae (strain ATCC 51907 / DSM 11121 / KW20 / Rd).